The sequence spans 218 residues: Protein-L-isoaspartate O-methyltransferase (218 aa).

Ser69 is an active-site residue.

Belongs to the methyltransferase superfamily. L-isoaspartyl/D-aspartyl protein methyltransferase family.

It is found in the cytoplasm. The enzyme catalyses [protein]-L-isoaspartate + S-adenosyl-L-methionine = [protein]-L-isoaspartate alpha-methyl ester + S-adenosyl-L-homocysteine. Its function is as follows. Catalyzes the methyl esterification of L-isoaspartyl residues in peptides and proteins that result from spontaneous decomposition of normal L-aspartyl and L-asparaginyl residues. It plays a role in the repair and/or degradation of damaged proteins. This is Protein-L-isoaspartate O-methyltransferase from Aromatoleum aromaticum (strain DSM 19018 / LMG 30748 / EbN1) (Azoarcus sp. (strain EbN1)).